Reading from the N-terminus, the 1491-residue chain is MSFSMRNGAHLIWIGLLVCCLVDMGASMEFTGAEGQWARFPMWNACCESEMSFNMKTKSAHGLLVYFDDEGFCDFLELLIHNGRLSLRFSIFCAEPATVFSDTAVNDSRWHAVTLRRNFKNTTLVVDEEIKWVEVKSKRRDMTVFSHLFLGGIPPELRSVALRLTSSAIKDEVPYKGWITNLRVNGSEPVLIGSDGVNSDICEADHICLNGGVCSIVNDEPICDCSETGFQGKDCSEEEAYVGGLAHLMMGDQGKRKEREEYMATFKGSEYFCYDLSPNPIQSSSDEITLSFKTLQRNGLMLHTGKSADYVNLALKNGAVSLVINLGSGAFEALVEPVNGKFNDNAWHDVKVTRNLRQHSGIGHAMVNKLHCSVTISVDGILTTTGYTQEDYTMLGSDDFFYVGGSPSTADLPGSPVSNNFMGCLKEVVYKNNDVRLELSRLAKLGDPKMKVSGVVAFKCENVATLDPVTFETPESFITLDKWSAKKAGSISFDFRTTEPNGLLLFSHGKPKPQQQKDPKSPKTLKVDFFAIEMLDGHLYLLLDMGSGTTKTRAVNKKVNDGEWYHVDFQRDGRSGTISVNSIRTPYNAPGESEILDLDDKLYLGGLPEDRAGLIFPTEVWTALLNYGYVGCVRDLFMDGQSKDIRRIAEAQRAVGVKPSCSKEPPKQCLSNPCLNSGTCREGWNRYVCDCSGTGYLGRSCERDATILSYDGSKFMKIQLPVVMHTEAEDVSLRFRSQRAYGVLMATTSQNSADTLRLELDGGRVRLTVNLDCIRINCTTSKGPETIFSGQNLNDNEWHTVRVVRRGKSLKLMVDDLQPSEGQITGDHTQLEFHNVETGIVTEKRYMPAVPSNFIGHLQGLSFNGMSYIDLCKNGDIDYCELNAMIGYRSIVADPVTFKSRSSYVTLPTLQAYYSMHLFFQFKTTSPDGLILYNRGDGNDFIVVELVKGYLHYVSDLGNGAHLIKGNSNTPLNDNHWHNVMISRDTNNLHTVKIDTKITTQTTMGAKNLDLKGDLYVGGVAKDMYKDLPKLVHSKEGFQGCLASVDLNGRLPDLQSDALSTAGQVERGCEGPSTTCQEDSCSNQGVCLQQWEGFSCDCSMTSYGGPLCNDPGTTYIFGRDGGLIVYTWPPNDRPSTRADRLAVGFSTQQKDAVLVRVDSSSGLGDYLQLQIERGNIKVVFNVGTDDINIEETSKFVNDGKYHIVRFTRSGGNATLQVDDLPVIERYPSGNIDNERLAIARQRIPYRLGRVVDDWLLDKGRQLTIFNSQTTIKIGGWEKGSRPFQGQLSGLYYNGLKVLNMAAEGDPNVRVEGSARLVGDMPSSSITPQSSVSAAGNRSETSPSITDITTTTASNRQGKQTTTPQDDLLVASAECPSDDEDIDPCDPSSGGLAHPPLPEAKGYPSPEVIRESSSTTGMVVGIVAAAALCILILLYAMYKYRNRDEGSYHVDESRNYISNSATQPNGAAVKEKPIGVPKNKKDKKNKDKEYYV.

Residues 1–27 (MSFSMRNGAHLIWIGLLVCCLVDMGAS) form the signal peptide. The Laminin G-like 1 domain occupies 28 to 208 (MEFTGAEGQW…SDICEADHIC (181 aa)). At 28 to 1415 (MEFTGAEGQW…EVIRESSSTT (1388 aa)) the chain is on the extracellular side. One can recognise an EGF-like 1 domain in the interval 198–236 (NSDICEADHICLNGGVCSIVNDEPICDCSETGFQGKDCS). Disulfide bonds link Cys202/Cys214, Cys208/Cys223, and Cys225/Cys235. 2 Laminin G-like domains span residues 263–460 (MATF…AFKC) and 467–661 (DPVT…KPSC). Residues Asp309, Leu326, and Met394 each contribute to the Ca(2+) site. Intrachain disulfides connect Cys424–Cys460, Cys632–Cys661, Cys669–Cys680, Cys674–Cys689, and Cys691–Cys701. The EGF-like 2 domain occupies 665–702 (PPKQCLSNPCLNSGTCREGWNRYVCDCSGTGYLGRSCE). Laminin G-like domains follow at residues 707–880 (ILSY…IDYC) and 894–1069 (DPVT…ERGC). Cystine bridges form between Cys1041-Cys1069, Cys1076-Cys1087, Cys1081-Cys1096, and Cys1098-Cys1108. The EGF-like 3 domain occupies 1072 to 1109 (PSTTCQEDSCSNQGVCLQQWEGFSCDCSMTSYGGPLCN). One can recognise a Laminin G-like 6 domain in the interval 1113 to 1314 (TTYIFGRDGG…DPNVRVEGSA (202 aa)). Residues 1318–1408 (GDMPSSSITP…AKGYPSPEVI (91 aa)) are disordered. Residues 1322 to 1353 (SSSITPQSSVSAAGNRSETSPSITDITTTTAS) are compositionally biased toward low complexity. Positions 1354-1364 (NRQGKQTTTPQ) are enriched in polar residues. A helical transmembrane segment spans residues 1416-1436 (GMVVGIVAAAALCILILLYAM). Over 1437–1491 (YKYRNRDEGSYHVDESRNYISNSATQPNGAAVKEKPIGVPKNKKDKKNKDKEYYV) the chain is Cytoplasmic. The interval 1457–1491 (SNSATQPNGAAVKEKPIGVPKNKKDKKNKDKEYYV) is disordered.

Belongs to the neurexin family.

The protein resides in the membrane. In terms of biological role, neuronal cell surface protein that may be involved in cell recognition and cell adhesion. This Danio rerio (Zebrafish) protein is Neurexin-1a (nrxn1a).